The primary structure comprises 419 residues: Pygopus homolog 1 (419 aa).

Disordered regions lie at residues 1 to 64 (MPAE…PNSD) and 175 to 338 (HFRQ…SSSD). Positions 18 to 30 (GDSGLDGLGGPGV) are enriched in gly residues. The Nuclear localization signal signature appears at 35–41 (PDKKKRK). Polar residues-rich tracts occupy residues 175 to 221 (HFRQ…SNHS) and 240 to 255 (DFTQ…NSSA). Over residues 276 to 286 (VNRNNAVNQEN) the composition is skewed to low complexity. Residues 287–307 (SRSSSTEATNNNPANGTQNKP) show a composition bias toward polar residues. The segment at 340–398 (VYPCGICTNEVNDDQDAILCEASCQKWFHRICTGMTETAYGLLTAEASAVWGCDTCMAD) adopts a PHD-type zinc-finger fold. Positions 341 to 388 (YPCGICTNEVNDDQDAILCEASCQKWFHRICTGMTETAYGLLTAEASA) are interaction with H3K4me2. The segment at 373-391 (GMTETAYGLLTAEASAVWG) is interaction with BCL9.

Interacts with BCL9 via The PHD-type zinc finger motiv, and thereby becomes part of the nuclear beta-catenin/TCF complex. Identified in a complex with BCL9L, CDC73, CTNNB1 and PYGO1. Interacts with histone H3 mono-, di- or tri-methylated at 'Lys4' (H3K4me1, H3K4me2, H3K4me3); the interaction is enhanced by the interaction with BCL9.

Its subcellular location is the nucleus. In terms of biological role, involved in signal transduction through the Wnt pathway. The sequence is that of Pygopus homolog 1 (PYGO1) from Homo sapiens (Human).